The sequence spans 1342 residues: DNA-directed RNA polymerase subunit beta (1342 aa).

Belongs to the RNA polymerase beta chain family. In terms of assembly, the RNAP catalytic core consists of 2 alpha, 1 beta, 1 beta' and 1 omega subunit. When a sigma factor is associated with the core the holoenzyme is formed, which can initiate transcription.

It carries out the reaction RNA(n) + a ribonucleoside 5'-triphosphate = RNA(n+1) + diphosphate. Functionally, DNA-dependent RNA polymerase catalyzes the transcription of DNA into RNA using the four ribonucleoside triphosphates as substrates. The protein is DNA-directed RNA polymerase subunit beta of Vibrio parahaemolyticus serotype O3:K6 (strain RIMD 2210633).